A 29-amino-acid polypeptide reads, in one-letter code: Orphan peptide CllNtx (29 aa).

In terms of processing, contains 3 disulfide bonds. Expressed by the venom gland.

It localises to the secreted. In terms of biological role, may act as a toxin. The protein is Orphan peptide CllNtx of Centruroides limpidus (Mexican scorpion).